Consider the following 99-residue polypeptide: RING finger protein Z (99 aa).

G2 carries N-myristoyl glycine; by host lipidation. The RING-type; atypical zinc-finger motif lies at 31 to 67 (CKSCWFENKGLVECNNHYLCLNCLTLLLSVSNRCPIC). The disordered stretch occupies residues 74-99 (KLRPSAAPTAPPTGAADSIRPPPYSP). A compositionally biased stretch (low complexity) spans 77 to 89 (PSAAPTAPPTGAA). The PTAP/PSAP motif signature appears at 81–84 (PTAP). Residues 94–97 (PPPY) carry the PPXY motif motif.

The protein belongs to the arenaviridae Z protein family. Interacts with protein NP; this interaction probably directs the encapsidated genome to budding sites. Interacts (via RING domain) with polymerase L; this interaction inhibits viral transcription and replication, Z partially blocks the product exit tunnel for the releasing nascent RNA product. Interacts with the glycoprotein complex; this interaction plays a role in virion budding. Interacts with host eIF4E; this interaction results in eIF4E reduced affinity for its substrate, the 5'-m7 G cap structure. Interacts (via late-budding domain) with host TSG101; this interaction is essential for budding and release of viral particles. Interacts with host RPLP0; this interaction may serve to load ribosome-like particles inside the virion. Interacts with host PML; this interaction induces PML bodies redistribution in the cytoplasm upon viral infection. Interacts with host TAX1BP1. Myristoylation is required for the role of RING finger protein Z in assembly and budding.

Its subcellular location is the virion. It is found in the host cytoplasm. It localises to the host perinuclear region. The protein resides in the host cell membrane. Plays a crucial role in virion assembly and budding. Expressed late in the virus life cycle, it acts as an inhibitor of viral transcription and RNA synthesis by interacting with the viral polymerase L. Presumably recruits the NP encapsidated genome to cellular membranes at budding sites via direct interaction with NP. Plays critical roles in the final steps of viral release by interacting with host TSG101, a member of the vacuolar protein-sorting pathway and using other cellular host proteins involved in vesicle formation pathway. The budding of the virus progeny occurs after association of protein Z with the viral glycoprotein complex SSP-GP1-GP2 at the cell periphery, step that requires myristoylation of protein Z. Also selectively represses protein production by associating with host eIF4E. In cell-based minigenome assay, has an inhibitory effect on the ribonucleoprotein machinery (vRNP), which is responsible for the replication and transcription of the viral genome. In Homo sapiens (Human), this protein is RING finger protein Z.